The following is a 161-amino-acid chain: SsrA-binding protein (161 aa).

It belongs to the SmpB family.

Its subcellular location is the cytoplasm. Its function is as follows. Required for rescue of stalled ribosomes mediated by trans-translation. Binds to transfer-messenger RNA (tmRNA), required for stable association of tmRNA with ribosomes. tmRNA and SmpB together mimic tRNA shape, replacing the anticodon stem-loop with SmpB. tmRNA is encoded by the ssrA gene; the 2 termini fold to resemble tRNA(Ala) and it encodes a 'tag peptide', a short internal open reading frame. During trans-translation Ala-aminoacylated tmRNA acts like a tRNA, entering the A-site of stalled ribosomes, displacing the stalled mRNA. The ribosome then switches to translate the ORF on the tmRNA; the nascent peptide is terminated with the 'tag peptide' encoded by the tmRNA and targeted for degradation. The ribosome is freed to recommence translation, which seems to be the essential function of trans-translation. The sequence is that of SsrA-binding protein from Baumannia cicadellinicola subsp. Homalodisca coagulata.